A 252-amino-acid polypeptide reads, in one-letter code: MLTFIGLGLFDEYDVSVRGLDAIKSADTVFLEVYTSVLMGAPIERLEAFYGKKITPLYREDVEIHADKILDAAEFGNAVFLTAGDSMVATTHSDLRIRAADRNIPTTIIHGASITTAVCGLSGLQNYRFGKSVSVPFPYGKWFPMTPIEVISANLKENLHTLVFLDIQKDKERYMKISEAVDLLEEQARRVDAGIPLYVGIARAGSPEPTVHAGNAEEMKAFDFGSPLHILIVPATLHEIEREYLERFAGLC.

S-adenosyl-L-methionine contacts are provided by residues L9, D85, V88, 113–114 (SI), L165, A204, and H229.

It belongs to the diphthine synthase family. In terms of assembly, homodimer.

It carries out the reaction 2-[(3S)-amino-3-carboxypropyl]-L-histidyl-[translation elongation factor 2] + 3 S-adenosyl-L-methionine = diphthine-[translation elongation factor 2] + 3 S-adenosyl-L-homocysteine + 3 H(+). It participates in protein modification; peptidyl-diphthamide biosynthesis. Functionally, S-adenosyl-L-methionine-dependent methyltransferase that catalyzes the trimethylation of the amino group of the modified target histidine residue in translation elongation factor 2 (EF-2), to form an intermediate called diphthine. The three successive methylation reactions represent the second step of diphthamide biosynthesis. This is Diphthine synthase from Methanocorpusculum labreanum (strain ATCC 43576 / DSM 4855 / Z).